The chain runs to 245 residues: 1-(5-phosphoribosyl)-5-[(5-phosphoribosylamino)methylideneamino] imidazole-4-carboxamide isomerase (245 aa).

Aspartate 8 serves as the catalytic Proton acceptor. Residue aspartate 130 is the Proton donor of the active site.

It belongs to the HisA/HisF family.

The protein resides in the cytoplasm. The catalysed reaction is 1-(5-phospho-beta-D-ribosyl)-5-[(5-phospho-beta-D-ribosylamino)methylideneamino]imidazole-4-carboxamide = 5-[(5-phospho-1-deoxy-D-ribulos-1-ylimino)methylamino]-1-(5-phospho-beta-D-ribosyl)imidazole-4-carboxamide. It functions in the pathway amino-acid biosynthesis; L-histidine biosynthesis; L-histidine from 5-phospho-alpha-D-ribose 1-diphosphate: step 4/9. The chain is 1-(5-phosphoribosyl)-5-[(5-phosphoribosylamino)methylideneamino] imidazole-4-carboxamide isomerase from Pseudomonas aeruginosa (strain LESB58).